The chain runs to 725 residues: MSDRYEIVLTCPKGLEGLLLEEARALGLEEAREQTAAVRGQAELEVAYRLCLWSRLANRVLLVLSRFSMNNAEELYEGVKAVDWRDHLEPAGSLAVEFSGHGSGIDNSHFGALKVKDAIVDRLRTAGGERPSIDKINPDLRVHLRLDRGEAVLSLDLSGHSLHQRGYRLQQGAAPLKENLAAAVLIRAGWPRIAAEGGALADPMCGVGTFLIEAALMAADVAPNLKRERWGFSNWLGHVPAIWKKLHAEAEQRAAAGLARPPLWIRGYEADPRLIQPGRNNVERAGLSDWVKIYQGELGSFEPRPDQNQKGLVISNPPYGERLGDEASLLYLYQNLGERLRQACLGWEAAVFTGAPELGKRMGLRSHKQYSFWNGALACKLLLIKVQTEQFVTGERRTRTEDEPVAEASSQARLSEGGQMFANRLQKNLKQLGKWARREGVECYRLYDADMPEYALAVDLYRDWVHVQEYAAPRSVDPDKAQARLLDALAAIPQALGVAQSRVAIKRRERQTGTKQYQRQAAQGQFMEVSEGGVKLLVNLTDYLDTGLFLDHRPLRLRIQREAAGKRFLNLFCYTATATVHAAKGGARSTTSVDLSKTYLDWARRNLSLNGFSDKHRLEQGDVMAWLAEDRGEYDLIFIDPPTFSNSKRMEGVFDVQRDHVELLDLAMARLAGGGVLYFSNNFRKFQLDESLVARYQVEEISAQTLDPDFARNPKIHRAWRFTAR.

The THUMP domain maps to 46–157; the sequence is VAYRLCLWSR…RGEAVLSLDL (112 aa).

This sequence belongs to the methyltransferase superfamily. RlmKL family.

It localises to the cytoplasm. The catalysed reaction is guanosine(2445) in 23S rRNA + S-adenosyl-L-methionine = N(2)-methylguanosine(2445) in 23S rRNA + S-adenosyl-L-homocysteine + H(+). It carries out the reaction guanosine(2069) in 23S rRNA + S-adenosyl-L-methionine = N(2)-methylguanosine(2069) in 23S rRNA + S-adenosyl-L-homocysteine + H(+). Its function is as follows. Specifically methylates the guanine in position 2445 (m2G2445) and the guanine in position 2069 (m7G2069) of 23S rRNA. This is Ribosomal RNA large subunit methyltransferase K/L from Ectopseudomonas mendocina (strain ymp) (Pseudomonas mendocina).